The sequence spans 323 residues: Probable cell division protein WhiA (323 aa).

The H-T-H motif DNA-binding region spans 275–309; it reads TLKELGEMLTTGQVSKSGINHRLRKLDQIAERLRS.

It belongs to the WhiA family.

Functionally, involved in cell division and chromosome segregation. In Listeria innocua serovar 6a (strain ATCC BAA-680 / CLIP 11262), this protein is Probable cell division protein WhiA.